Reading from the N-terminus, the 433-residue chain is Cysteine--tRNA ligase (433 aa).

Cys4 lines the Zn(2+) pocket. The 'HIGH' region signature appears at 6–16 (PTVYDTAHIGN). Zn(2+)-binding residues include Cys188, His213, and Glu217. Residues 246-250 (KMSKS) carry the 'KMSKS' region motif. Lys249 contacts ATP.

The protein belongs to the class-I aminoacyl-tRNA synthetase family. Monomer. The cofactor is Zn(2+).

It localises to the cytoplasm. The catalysed reaction is tRNA(Cys) + L-cysteine + ATP = L-cysteinyl-tRNA(Cys) + AMP + diphosphate. This Wolbachia sp. subsp. Brugia malayi (strain TRS) protein is Cysteine--tRNA ligase.